We begin with the raw amino-acid sequence, 294 residues long: Putative cuticle collagen 145 (294 aa).

The signal sequence occupies residues Met1–Thr30. Residues Thr100–Pro112 show a composition bias toward pro residues. Disordered regions lie at residues Thr100–Ala133 and Pro148–Asn276. Triple-helical region regions lie at residues Pro102–Asp127 and Pro148–Asp277. 2 stretches are compositionally biased toward low complexity: residues Ala164–Pro194 and Ala219–Pro265. Residues Gly218–Asn276 enclose the Collagen-like domain.

Belongs to the cuticular collagen family. In terms of assembly, collagen polypeptide chains are complexed within the cuticle by disulfide bonds and other types of covalent cross-links.

In terms of biological role, nematode cuticles are composed largely of collagen-like proteins. The cuticle functions both as an exoskeleton and as a barrier to protect the worm from its environment. The chain is Putative cuticle collagen 145 (col-145) from Caenorhabditis elegans.